The sequence spans 349 residues: Protein POOR HOMOLOGOUS SYNAPSIS 1 (349 aa).

The protein localises to the cytoplasm. In terms of biological role, required for accurate chromosome segregation in meiosis. Required for pairing to occur between homologous chromosomes. Acts in early recombination steps and ensures pairing fidelity and proper repair of meiotic DNA double-strand-breaks. Regulates recombination and pairing of homologous chromosomes during meiotic prophase by controlling transport of RAD50 from cytoplasm to the nucleus. May affect pairing of the gene-rich fraction of the genome rather than preventing pairing between repetitive DNA elements. This is Protein POOR HOMOLOGOUS SYNAPSIS 1 from Arabidopsis thaliana (Mouse-ear cress).